Consider the following 218-residue polypeptide: ATP phosphoribosyltransferase (218 aa).

Belongs to the ATP phosphoribosyltransferase family. Short subfamily. In terms of assembly, heteromultimer composed of HisG and HisZ subunits.

It is found in the cytoplasm. It catalyses the reaction 1-(5-phospho-beta-D-ribosyl)-ATP + diphosphate = 5-phospho-alpha-D-ribose 1-diphosphate + ATP. It functions in the pathway amino-acid biosynthesis; L-histidine biosynthesis; L-histidine from 5-phospho-alpha-D-ribose 1-diphosphate: step 1/9. Catalyzes the condensation of ATP and 5-phosphoribose 1-diphosphate to form N'-(5'-phosphoribosyl)-ATP (PR-ATP). Has a crucial role in the pathway because the rate of histidine biosynthesis seems to be controlled primarily by regulation of HisG enzymatic activity. This is ATP phosphoribosyltransferase from Burkholderia mallei (strain ATCC 23344).